The chain runs to 244 residues: RAD51-like protein 1 (244 aa).

Interacts with brc-2 and rad-51.

It localises to the nucleus. Functionally, has a role in the homologous recombination repair (HRR) of genomic DNA during meiosis. Required for rad-51 recruitment onto ssDNA gaps generated at stalled replication fork barriers. The polypeptide is RAD51-like protein 1 (Caenorhabditis briggsae).